The chain runs to 357 residues: 3-isopropylmalate dehydrogenase (357 aa).

4 residues coordinate substrate: arginine 97, arginine 107, arginine 135, and aspartate 224. Mg(2+) is bound by residues aspartate 224, aspartate 248, and aspartate 252. An NAD(+)-binding site is contributed by 282–294; it reads GSAPDIAGQDKAN.

The protein belongs to the isocitrate and isopropylmalate dehydrogenases family. LeuB type 1 subfamily. As to quaternary structure, homodimer. It depends on Mg(2+) as a cofactor. Mn(2+) serves as cofactor.

The protein resides in the cytoplasm. The catalysed reaction is (2R,3S)-3-isopropylmalate + NAD(+) = 4-methyl-2-oxopentanoate + CO2 + NADH. It participates in amino-acid biosynthesis; L-leucine biosynthesis; L-leucine from 3-methyl-2-oxobutanoate: step 3/4. In terms of biological role, catalyzes the oxidation of 3-carboxy-2-hydroxy-4-methylpentanoate (3-isopropylmalate) to 3-carboxy-4-methyl-2-oxopentanoate. The product decarboxylates to 4-methyl-2 oxopentanoate. The polypeptide is 3-isopropylmalate dehydrogenase (Synechococcus sp. (strain CC9605)).